We begin with the raw amino-acid sequence, 639 residues long: 1-deoxy-D-xylulose-5-phosphate synthase (639 aa).

Residues H76 and 117–119 (AHS) each bind thiamine diphosphate. Residue D148 coordinates Mg(2+). Thiamine diphosphate-binding positions include 149-150 (GS), N181, Y288, and E370. N181 provides a ligand contact to Mg(2+).

This sequence belongs to the transketolase family. DXPS subfamily. As to quaternary structure, homodimer. It depends on Mg(2+) as a cofactor. Thiamine diphosphate serves as cofactor.

The enzyme catalyses D-glyceraldehyde 3-phosphate + pyruvate + H(+) = 1-deoxy-D-xylulose 5-phosphate + CO2. Its pathway is metabolic intermediate biosynthesis; 1-deoxy-D-xylulose 5-phosphate biosynthesis; 1-deoxy-D-xylulose 5-phosphate from D-glyceraldehyde 3-phosphate and pyruvate: step 1/1. Its function is as follows. Catalyzes the acyloin condensation reaction between C atoms 2 and 3 of pyruvate and glyceraldehyde 3-phosphate to yield 1-deoxy-D-xylulose-5-phosphate (DXP). The protein is 1-deoxy-D-xylulose-5-phosphate synthase of Leptothrix cholodnii (strain ATCC 51168 / LMG 8142 / SP-6) (Leptothrix discophora (strain SP-6)).